Consider the following 368-residue polypeptide: DNA replication and repair protein RecF (368 aa).

An ATP-binding site is contributed by 30 to 37; that stretch reads GNNAQGKT.

The protein belongs to the RecF family.

The protein resides in the cytoplasm. In terms of biological role, the RecF protein is involved in DNA metabolism; it is required for DNA replication and normal SOS inducibility. RecF binds preferentially to single-stranded, linear DNA. It also seems to bind ATP. The sequence is that of DNA replication and repair protein RecF from Streptococcus pyogenes serotype M12 (strain MGAS9429).